A 148-amino-acid polypeptide reads, in one-letter code: MKVILTENLSSLGQIGQVVNVAPGYARNYLFPQGLALEATGKNVKELDHRKRVLAAKREKIRQEMLSVAEKINQVKLVLRRKVADEDKLYGSVSAADIQSALEERGFIVARKDIQLDQPIKQLGEFTVSVRVDAQIAATVGVVVEKEE.

It belongs to the bacterial ribosomal protein bL9 family.

Its function is as follows. Binds to the 23S rRNA. The chain is Large ribosomal subunit protein bL9 from Syntrophobacter fumaroxidans (strain DSM 10017 / MPOB).